A 264-amino-acid polypeptide reads, in one-letter code: Thiazole synthase (264 aa).

The active-site Schiff-base intermediate with DXP is K106. 1-deoxy-D-xylulose 5-phosphate contacts are provided by residues G167, 193–194, and 215–216; these read AG and NS.

It belongs to the ThiG family. Homotetramer. Forms heterodimers with either ThiH or ThiS.

The protein localises to the cytoplasm. It carries out the reaction [ThiS sulfur-carrier protein]-C-terminal-Gly-aminoethanethioate + 2-iminoacetate + 1-deoxy-D-xylulose 5-phosphate = [ThiS sulfur-carrier protein]-C-terminal Gly-Gly + 2-[(2R,5Z)-2-carboxy-4-methylthiazol-5(2H)-ylidene]ethyl phosphate + 2 H2O + H(+). It functions in the pathway cofactor biosynthesis; thiamine diphosphate biosynthesis. Its function is as follows. Catalyzes the rearrangement of 1-deoxy-D-xylulose 5-phosphate (DXP) to produce the thiazole phosphate moiety of thiamine. Sulfur is provided by the thiocarboxylate moiety of the carrier protein ThiS. In vitro, sulfur can be provided by H(2)S. The chain is Thiazole synthase from Azotobacter vinelandii (strain DJ / ATCC BAA-1303).